A 795-amino-acid polypeptide reads, in one-letter code: Protocadherin beta-5 (795 aa).

Positions 1 to 30 are cleaved as a signal peptide; the sequence is METALAKTPQKRQVMFLAILLLLWEAGSEA. Topologically, residues 31 to 689 are extracellular; sequence VRYSIPEETE…AQADSLTVYL (659 aa). Cadherin domains are found at residues 35–133, 138–242, 247–346, 351–450, and 455–560; these read IPEE…SPEF, MLLK…APEF, YEVQ…APEL, LSSP…APAF, and YTLF…SPFV. Asparagine 169 is a glycosylation site (N-linked (GlcNAc...) asparagine). An N6-acetyllysine modification is found at lysine 296. 2 N-linked (GlcNAc...) asparagine glycosylation sites follow: asparagine 417 and asparagine 435. Asparagine 566 is a glycosylation site (N-linked (GlcNAc...) asparagine). One can recognise a Cadherin 6 domain in the interval 567-670; it reads GSAPCTELVP…LVDGFSQPYL (104 aa). Residues 690–710 traverse the membrane as a helical segment; that stretch reads VVALASVSSLFLFSVLLFVAV. At 711 to 795 the chain is on the cytoplasmic side; that stretch reads RLCRRSRAAP…AAFRNSFGLN (85 aa).

The protein resides in the cell membrane. In terms of biological role, potential calcium-dependent cell-adhesion protein. May be involved in the establishment and maintenance of specific neuronal connections in the brain. In Pan troglodytes (Chimpanzee), this protein is Protocadherin beta-5 (PCDHB5).